We begin with the raw amino-acid sequence, 75 residues long: uncharacterized protein (75 aa).

This is an uncharacterized protein from Saccharolobus islandicus (Sulfolobus islandicus).